Consider the following 247-residue polypeptide: Adenosylcobinamide-GDP ribazoletransferase (247 aa).

5 helical membrane-spanning segments follow: residues 34 to 54 (IITFPLIGLLLGAISGLVFMV), 59 to 79 (CGAPLAALFSVLVLVLMTGGF), 113 to 133 (GGLALIFVVLAKILVLSELAL), 138 to 158 (ILASLAAACAISRGTAALLMY), and 194 to 214 (VLLPGMHGVAAMVVTMVAIFI).

Belongs to the CobS family. It depends on Mg(2+) as a cofactor.

Its subcellular location is the cell inner membrane. It carries out the reaction alpha-ribazole + adenosylcob(III)inamide-GDP = adenosylcob(III)alamin + GMP + H(+). The enzyme catalyses alpha-ribazole 5'-phosphate + adenosylcob(III)inamide-GDP = adenosylcob(III)alamin 5'-phosphate + GMP + H(+). The protein operates within cofactor biosynthesis; adenosylcobalamin biosynthesis; adenosylcobalamin from cob(II)yrinate a,c-diamide: step 7/7. Functionally, joins adenosylcobinamide-GDP and alpha-ribazole to generate adenosylcobalamin (Ado-cobalamin). Also synthesizes adenosylcobalamin 5'-phosphate from adenosylcobinamide-GDP and alpha-ribazole 5'-phosphate. The sequence is that of Adenosylcobinamide-GDP ribazoletransferase from Escherichia coli O45:K1 (strain S88 / ExPEC).